The following is a 176-amino-acid chain: ATP synthase subunit delta (176 aa).

The protein belongs to the ATPase delta chain family. As to quaternary structure, F-type ATPases have 2 components, F(1) - the catalytic core - and F(0) - the membrane proton channel. F(1) has five subunits: alpha(3), beta(3), gamma(1), delta(1), epsilon(1). F(0) has three main subunits: a(1), b(2) and c(10-14). The alpha and beta chains form an alternating ring which encloses part of the gamma chain. F(1) is attached to F(0) by a central stalk formed by the gamma and epsilon chains, while a peripheral stalk is formed by the delta and b chains.

The protein resides in the cell inner membrane. Functionally, f(1)F(0) ATP synthase produces ATP from ADP in the presence of a proton or sodium gradient. F-type ATPases consist of two structural domains, F(1) containing the extramembraneous catalytic core and F(0) containing the membrane proton channel, linked together by a central stalk and a peripheral stalk. During catalysis, ATP synthesis in the catalytic domain of F(1) is coupled via a rotary mechanism of the central stalk subunits to proton translocation. In terms of biological role, this protein is part of the stalk that links CF(0) to CF(1). It either transmits conformational changes from CF(0) to CF(1) or is implicated in proton conduction. The polypeptide is ATP synthase subunit delta (Campylobacter curvus (strain 525.92)).